Here is a 422-residue protein sequence, read N- to C-terminus: Dihydroorotase (422 aa).

Residues histidine 59 and histidine 61 each contribute to the Zn(2+) site. Substrate contacts are provided by residues 61 to 63 and asparagine 93; that span reads HFR. Zn(2+) is bound by residues aspartate 150, histidine 177, and histidine 230. Residue asparagine 276 participates in substrate binding. Aspartate 303 is a Zn(2+) binding site. The active site involves aspartate 303. Histidine 307 is a binding site for substrate.

The protein belongs to the metallo-dependent hydrolases superfamily. DHOase family. Class I DHOase subfamily. Requires Zn(2+) as cofactor.

The enzyme catalyses (S)-dihydroorotate + H2O = N-carbamoyl-L-aspartate + H(+). The protein operates within pyrimidine metabolism; UMP biosynthesis via de novo pathway; (S)-dihydroorotate from bicarbonate: step 3/3. In terms of biological role, catalyzes the reversible cyclization of carbamoyl aspartate to dihydroorotate. This is Dihydroorotase from Streptococcus thermophilus (strain CNRZ 1066).